Here is a 274-residue protein sequence, read N- to C-terminus: Long chain fatty acid elongase 5 (274 aa).

Residues 1–23 are Extracellular-facing; it reads MMDQILGTNFTYEGAKEVARGLE. A helical membrane pass occupies residues 24–44; sequence GFSAKLAVGYIATIFGLKYYM. Over 45–61 the chain is Cytoplasmic; it reads KDRKAFDLSTPLNIWNG. Residues 62 to 82 form a helical membrane-spanning segment; sequence ILSTFSLLGFLFTFPTLLSVI. Over 83–105 the chain is Extracellular; that stretch reads RKDGFSHTYSHVSELYTDSTSGY. The helical transmembrane segment at 106–126 threads the bilayer; sequence WIFLWVISKIPELLDTVFIVL. Residues 127–129 lie on the Cytoplasmic side of the membrane; it reads RKR. The helical transmembrane segment at 130 to 150 threads the bilayer; that stretch reads PLIFMHWYHHALTGYYALVCY. The Extracellular portion of the chain corresponds to 151-156; sequence HEDAVH. Residues 157–177 form a helical membrane-spanning segment; it reads MVWVVWMNYIIHAFMYGYYLL. Residues 178-187 lie on the Cytoplasmic side of the membrane; it reads KSLKVPIPPS. Residues 188-208 form a helical membrane-spanning segment; sequence VAQAITTSQMVQFAVAIFAQV. Topologically, residues 209 to 227 are extracellular; sequence HVSYKHYVEGVEGLAYSFR. A helical transmembrane segment spans residues 228–248; that stretch reads GTAIGFFMLTTYFYLWIQFYK. The Cytoplasmic segment spans residues 249–274; that stretch reads EHYLKNGGKKYNLAKDQAKTQTKKAN.

It belongs to the ELO family. As to expression, expressed in the gut and unidentified head cells.

It is found in the membrane. It catalyses the reaction 11-methyldodecanoyl-CoA + malonyl-CoA + H(+) = 3-oxoisopentadecanoyl-CoA + CO2 + CoA. The catalysed reaction is isopentadecanoyl-CoA + malonyl-CoA + H(+) = 3-oxoisoheptadecanoyl-CoA + CO2 + CoA. Its pathway is lipid metabolism; fatty acid biosynthesis. Functionally, catalyzes the first and rate-limiting reaction of the four reactions that constitute the long-chain fatty acids elongation cycle. Uses malonyl-CoA to add 2 carbons per cycle to the chain of long-chain fatty acids. Condensing enzyme required for the formation of isopentadecanoate (C15iso) and isoheptadecanoate (C17iso), both play critical roles in animal development and growth. The polypeptide is Long chain fatty acid elongase 5 (Caenorhabditis elegans).